Reading from the N-terminus, the 42-residue chain is Large ribosomal subunit protein bL36 (42 aa).

It belongs to the bacterial ribosomal protein bL36 family.

In Anaplasma marginale (strain St. Maries), this protein is Large ribosomal subunit protein bL36.